The primary structure comprises 262 residues: Indole-3-glycerol phosphate synthase (262 aa).

The protein belongs to the TrpC family.

It catalyses the reaction 1-(2-carboxyphenylamino)-1-deoxy-D-ribulose 5-phosphate + H(+) = (1S,2R)-1-C-(indol-3-yl)glycerol 3-phosphate + CO2 + H2O. The protein operates within amino-acid biosynthesis; L-tryptophan biosynthesis; L-tryptophan from chorismate: step 4/5. This Bordetella pertussis (strain Tohama I / ATCC BAA-589 / NCTC 13251) protein is Indole-3-glycerol phosphate synthase.